Consider the following 260-residue polypeptide: Cytosolic Fe-S cluster assembly factor Nubp2 homolog (260 aa).

Residue 14 to 21 (GKGGVGKS) coordinates ATP. 2 residues coordinate [4Fe-4S] cluster: Cys-188 and Cys-191.

The protein belongs to the Mrp/NBP35 ATP-binding proteins family. NUBP2/CFD1 subfamily. As to quaternary structure, heterotetramer of 2 Nubp1 and 2 Nubp2 chains. The cofactor is [4Fe-4S] cluster.

The protein localises to the cytoplasm. Its function is as follows. Component of the cytosolic iron-sulfur (Fe/S) protein assembly (CIA) machinery. Required for maturation of extramitochondrial Fe-S proteins. The Nubp1-Nubp2 heterotetramer forms a Fe-S scaffold complex, mediating the de novo assembly of an Fe-S cluster and its transfer to target apoproteins. The sequence is that of Cytosolic Fe-S cluster assembly factor Nubp2 homolog from Drosophila sechellia (Fruit fly).